Reading from the N-terminus, the 261-residue chain is Pimeloyl-[acyl-carrier protein] methyl ester esterase (261 aa).

An AB hydrolase-1 domain is found at 16-241 (LVLIHGWGMN…QASHAPFISH (226 aa)). Residues Trp22, 82 to 83 (SL), and 143 to 147 (FMTLQ) each bind substrate. The Nucleophile role is filled by Ser82. Residues Asp207 and His235 contribute to the active site. His235 contacts substrate.

Belongs to the AB hydrolase superfamily. Carboxylesterase BioH family. In terms of assembly, monomer.

The protein resides in the cytoplasm. It carries out the reaction 6-carboxyhexanoyl-[ACP] methyl ester + H2O = 6-carboxyhexanoyl-[ACP] + methanol + H(+). It participates in cofactor biosynthesis; biotin biosynthesis. The physiological role of BioH is to remove the methyl group introduced by BioC when the pimeloyl moiety is complete. It allows to synthesize pimeloyl-ACP via the fatty acid synthetic pathway through the hydrolysis of the ester bonds of pimeloyl-ACP esters. The polypeptide is Pimeloyl-[acyl-carrier protein] methyl ester esterase (Aliivibrio salmonicida (strain LFI1238) (Vibrio salmonicida (strain LFI1238))).